A 217-amino-acid chain; its full sequence is 3,4-dihydroxy-2-butanone 4-phosphate synthase (217 aa).

D-ribulose 5-phosphate is bound by residues Arg-37–Glu-38, Asp-42, Arg-150–Thr-154, and Glu-174. Glu-38 is a Mg(2+) binding site. His-153 lines the Mg(2+) pocket.

It belongs to the DHBP synthase family. In terms of assembly, homodimer. It depends on Mg(2+) as a cofactor. Requires Mn(2+) as cofactor.

It carries out the reaction D-ribulose 5-phosphate = (2S)-2-hydroxy-3-oxobutyl phosphate + formate + H(+). Its pathway is cofactor biosynthesis; riboflavin biosynthesis; 2-hydroxy-3-oxobutyl phosphate from D-ribulose 5-phosphate: step 1/1. Catalyzes the conversion of D-ribulose 5-phosphate to formate and 3,4-dihydroxy-2-butanone 4-phosphate. The polypeptide is 3,4-dihydroxy-2-butanone 4-phosphate synthase (Syntrophotalea carbinolica (strain DSM 2380 / NBRC 103641 / GraBd1) (Pelobacter carbinolicus)).